Consider the following 535-residue polypeptide: L-aspartate oxidase (535 aa).

Residues 16 to 19 (SGAA), K38, 45 to 52 (ATFYAQGG), and D223 contribute to the FAD site. Residue R290 is the Proton donor/acceptor of the active site. Residues E375 and 391–392 (SL) each bind FAD.

The protein belongs to the FAD-dependent oxidoreductase 2 family. NadB subfamily. FAD is required as a cofactor.

Its subcellular location is the cytoplasm. The enzyme catalyses L-aspartate + O2 = iminosuccinate + H2O2. It functions in the pathway cofactor biosynthesis; NAD(+) biosynthesis; iminoaspartate from L-aspartate (oxidase route): step 1/1. In terms of biological role, catalyzes the oxidation of L-aspartate to iminoaspartate, the first step in the de novo biosynthesis of NAD(+). The sequence is that of L-aspartate oxidase (nadB) from Vibrio cholerae serotype O1 (strain ATCC 39315 / El Tor Inaba N16961).